Here is a 157-residue protein sequence, read N- to C-terminus: Large ribosomal subunit protein mL59 (157 aa).

The protein belongs to the mitochondrion-specific ribosomal protein mL59 family. Component of the mitochondrial large ribosomal subunit (mt-LSU). Mature yeast 74S mitochondrial ribosomes consist of a small (37S) and a large (54S) subunit. The 37S small subunit contains a 15S ribosomal RNA (15S mt-rRNA) and 34 different proteins. The 54S large subunit contains a 21S rRNA (21S mt-rRNA) and 46 different proteins.

The protein localises to the mitochondrion. In terms of biological role, component of the mitochondrial ribosome (mitoribosome), a dedicated translation machinery responsible for the synthesis of mitochondrial genome-encoded proteins, including at least some of the essential transmembrane subunits of the mitochondrial respiratory chain. The mitoribosomes are attached to the mitochondrial inner membrane and translation products are cotranslationally integrated into the membrane. The sequence is that of Large ribosomal subunit protein mL59 (MRPL25) from Saccharomyces cerevisiae (strain ATCC 204508 / S288c) (Baker's yeast).